Reading from the N-terminus, the 436-residue chain is 3-ketoacyl-CoA thiolase (436 aa).

Cys-99 acts as the Acyl-thioester intermediate in catalysis. Catalysis depends on proton acceptor residues His-392 and Cys-422.

Belongs to the thiolase-like superfamily. Thiolase family. Heterotetramer of two alpha chains (FadJ) and two beta chains (FadI).

The protein resides in the cytoplasm. The catalysed reaction is an acyl-CoA + acetyl-CoA = a 3-oxoacyl-CoA + CoA. It participates in lipid metabolism; fatty acid beta-oxidation. Catalyzes the final step of fatty acid oxidation in which acetyl-CoA is released and the CoA ester of a fatty acid two carbons shorter is formed. This Escherichia coli O127:H6 (strain E2348/69 / EPEC) protein is 3-ketoacyl-CoA thiolase.